The primary structure comprises 77 residues: SS18-like protein 2 (77 aa).

The short motif at 50–53 is the SH2-binding element; the sequence is YQHV.

Belongs to the SS18 family.

In Homo sapiens (Human), this protein is SS18-like protein 2 (SS18L2).